The following is a 662-amino-acid chain: DNA ligase (662 aa).

NAD(+) is bound by residues 31–35 (DSEYD), 79–80 (SL), and glutamate 119. The active-site N6-AMP-lysine intermediate is the lysine 121. Residues arginine 142, glutamate 176, lysine 288, and lysine 312 each contribute to the NAD(+) site. Cysteine 405, cysteine 408, cysteine 421, and cysteine 427 together coordinate Zn(2+). In terms of domain architecture, BRCT spans 583–662 (NIEKKLDNLT…DELNSFLDNL (80 aa)).

Belongs to the NAD-dependent DNA ligase family. LigA subfamily. Mg(2+) is required as a cofactor. Requires Mn(2+) as cofactor.

The catalysed reaction is NAD(+) + (deoxyribonucleotide)n-3'-hydroxyl + 5'-phospho-(deoxyribonucleotide)m = (deoxyribonucleotide)n+m + AMP + beta-nicotinamide D-nucleotide.. Functionally, DNA ligase that catalyzes the formation of phosphodiester linkages between 5'-phosphoryl and 3'-hydroxyl groups in double-stranded DNA using NAD as a coenzyme and as the energy source for the reaction. It is essential for DNA replication and repair of damaged DNA. The sequence is that of DNA ligase from Finegoldia magna (strain ATCC 29328 / DSM 20472 / WAL 2508) (Peptostreptococcus magnus).